The following is a 122-amino-acid chain: Large ribosomal subunit protein uL14c (122 aa).

It belongs to the universal ribosomal protein uL14 family. As to quaternary structure, part of the 50S ribosomal subunit.

It localises to the plastid. The protein localises to the chloroplast. Functionally, binds to 23S rRNA. The protein is Large ribosomal subunit protein uL14c of Chara vulgaris (Common stonewort).